A 290-amino-acid chain; its full sequence is Putative beta-lactamase HcpC (290 aa).

Residues 1–25 (MLENVKKSLFRVLCLGALCLGGLMA) form the signal peptide. TPR repeat units lie at residues 29-62 (PKEL…KENS), 64-98 (CFNL…NYSN), 100-133 (CHLL…LKYA), 134-170 (EGCA…NDGD), 172-205 (CTIL…LKDS), 206-242 (PGCF…ENGG), and 244-278 (CFNL…GAKG). Intrachain disulfides connect cysteine 56–cysteine 64, cysteine 92–cysteine 100, cysteine 128–cysteine 136, cysteine 164–cysteine 172, cysteine 200–cysteine 208, cysteine 236–cysteine 244, and cysteine 272–cysteine 280.

The protein belongs to the hcp beta-lactamase family.

The protein resides in the secreted. It catalyses the reaction a beta-lactam + H2O = a substituted beta-amino acid. Its function is as follows. May hydrolyze 6-aminopenicillinic acid and 7-aminocephalosporanic acid (ACA) derivatives. The sequence is that of Putative beta-lactamase HcpC (hcpC) from Helicobacter pylori (strain J99 / ATCC 700824) (Campylobacter pylori J99).